We begin with the raw amino-acid sequence, 318 residues long: Aspartate carbamoyltransferase catalytic subunit (318 aa).

Positions 59 and 60 each coordinate carbamoyl phosphate. An L-aspartate-binding site is contributed by K87. 3 residues coordinate carbamoyl phosphate: R109, H137, and Q140. Residues R170 and R224 each contribute to the L-aspartate site. Carbamoyl phosphate contacts are provided by G265 and P266.

Belongs to the aspartate/ornithine carbamoyltransferase superfamily. ATCase family. Heterododecamer (2C3:3R2) of six catalytic PyrB chains organized as two trimers (C3), and six regulatory PyrI chains organized as three dimers (R2).

It carries out the reaction carbamoyl phosphate + L-aspartate = N-carbamoyl-L-aspartate + phosphate + H(+). It functions in the pathway pyrimidine metabolism; UMP biosynthesis via de novo pathway; (S)-dihydroorotate from bicarbonate: step 2/3. Functionally, catalyzes the condensation of carbamoyl phosphate and aspartate to form carbamoyl aspartate and inorganic phosphate, the committed step in the de novo pyrimidine nucleotide biosynthesis pathway. The chain is Aspartate carbamoyltransferase catalytic subunit from Allorhizobium ampelinum (strain ATCC BAA-846 / DSM 112012 / S4) (Agrobacterium vitis (strain S4)).